The sequence spans 239 residues: Probable transcriptional regulatory protein BBR47_14810 (239 aa).

This sequence belongs to the TACO1 family. YeeN subfamily.

The protein localises to the cytoplasm. The sequence is that of Probable transcriptional regulatory protein BBR47_14810 from Brevibacillus brevis (strain 47 / JCM 6285 / NBRC 100599).